Here is a 203-residue protein sequence, read N- to C-terminus: Large ribosomal subunit protein bL25 (203 aa).

It belongs to the bacterial ribosomal protein bL25 family. CTC subfamily. As to quaternary structure, part of the 50S ribosomal subunit; part of the 5S rRNA/L5/L18/L25 subcomplex. Contacts the 5S rRNA. Binds to the 5S rRNA independently of L5 and L18.

This is one of the proteins that binds to the 5S RNA in the ribosome where it forms part of the central protuberance. This is Large ribosomal subunit protein bL25 from Cupriavidus pinatubonensis (strain JMP 134 / LMG 1197) (Cupriavidus necator (strain JMP 134)).